The sequence spans 601 residues: 66 kDa stress protein (601 aa).

WD repeat units lie at residues 56-95 (EHAQPATVAKYAPSGFYIASGDLSGTLRIWDTTQLEHPLK), 100-143 (VLSG…GEIT), 145-184 (HSKAIASCDFKATRPFRVITGAEDFQANWFEGPPFKFKHA), 187-226 (EHTRFLTCVRFSPDGEKVLTVGLDKKGFILDGKTGEKVGA), 233-272 (AHALGIYSCSWSPDSKKVLTVSADKSAKIWDDKGTLLTTF), 318-357 (GHNKLVTSLAFDTASKALYSGSYDGVILQWNLETGIAVPI), 435-478 (ASTT…LSEQ), 483-522 (GHRGFLTAIAYSPDGKHFASADQNRDIFVWDKASRKIKVE), 526-565 (YHNARVTSLAWNSNSNNIVTGSLDSHVYVWSVSEPSKHIA), and 569-600 (AHRGGVNAVLWVDEHTVASAGLDCSIKTWTIK).

The protein belongs to the WD repeat AIP1 family.

Associated with the process of cyst formation. This chain is 66 kDa stress protein, found in Physarum polycephalum (Slime mold).